We begin with the raw amino-acid sequence, 473 residues long: Photosystem II CP43 reaction center protein (473 aa).

A propeptide spanning residues 1 to 14 (MKTLYSLRRFYHVE) is cleaved from the precursor. Position 15 is an N-acetylthreonine (Thr-15). Thr-15 carries the post-translational modification Phosphothreonine. The next 5 membrane-spanning stretches (helical) occupy residues 69–93 (LFEVAHFVPEKPMYEQGLILLPHLA), 134–155 (LIGPETLEESFPFFGYVWKDKN), 178–200 (KAVWFGGVYDTWAPGGGDVRKIT), 255–275 (KPFAWARRAFIWSGEAYLSYS), and 291–312 (WFNNTAYPSEFYGPTGPEASQA). Residue Glu-367 coordinates [CaMn4O5] cluster. Residues 447 to 471 (RARAAAAGFEKGIDRETEPVFFMNP) form a helical membrane-spanning segment.

The protein belongs to the PsbB/PsbC family. PsbC subfamily. In terms of assembly, PSII is composed of 1 copy each of membrane proteins PsbA, PsbB, PsbC, PsbD, PsbE, PsbF, PsbH, PsbI, PsbJ, PsbK, PsbL, PsbM, PsbT, PsbX, PsbY, PsbZ, Psb30/Ycf12, at least 3 peripheral proteins of the oxygen-evolving complex and a large number of cofactors. It forms dimeric complexes. Binds multiple chlorophylls and provides some of the ligands for the Ca-4Mn-5O cluster of the oxygen-evolving complex. It may also provide a ligand for a Cl- that is required for oxygen evolution. PSII binds additional chlorophylls, carotenoids and specific lipids. serves as cofactor.

Its subcellular location is the plastid. It localises to the chloroplast thylakoid membrane. Its function is as follows. One of the components of the core complex of photosystem II (PSII). It binds chlorophyll and helps catalyze the primary light-induced photochemical processes of PSII. PSII is a light-driven water:plastoquinone oxidoreductase, using light energy to abstract electrons from H(2)O, generating O(2) and a proton gradient subsequently used for ATP formation. The protein is Photosystem II CP43 reaction center protein of Staurastrum punctulatum (Green alga).